Reading from the N-terminus, the 228-residue chain is Urease accessory protein UreF 1 (228 aa).

This sequence belongs to the UreF family. UreD, UreF and UreG form a complex that acts as a GTP-hydrolysis-dependent molecular chaperone, activating the urease apoprotein by helping to assemble the nickel containing metallocenter of UreC. The UreE protein probably delivers the nickel.

The protein localises to the cytoplasm. Functionally, required for maturation of urease via the functional incorporation of the urease nickel metallocenter. The sequence is that of Urease accessory protein UreF 1 from Brucella canis (strain ATCC 23365 / NCTC 10854 / RM-666).